The chain runs to 652 residues: DNA ligase (652 aa).

Residues 29 to 33, 78 to 79, and Glu107 each bind NAD(+); these read DSDYD and SL. Lys109 serves as the catalytic N6-AMP-lysine intermediate. Positions 130, 164, 278, and 302 each coordinate NAD(+). Residues Cys395, Cys398, Cys413, and Cys418 each coordinate Zn(2+). A BRCT domain is found at 577 to 652; it reads NSDAALFGLT…IEDEDWLRKF (76 aa).

This sequence belongs to the NAD-dependent DNA ligase family. LigA subfamily. Requires Mg(2+) as cofactor. It depends on Mn(2+) as a cofactor.

It catalyses the reaction NAD(+) + (deoxyribonucleotide)n-3'-hydroxyl + 5'-phospho-(deoxyribonucleotide)m = (deoxyribonucleotide)n+m + AMP + beta-nicotinamide D-nucleotide.. In terms of biological role, DNA ligase that catalyzes the formation of phosphodiester linkages between 5'-phosphoryl and 3'-hydroxyl groups in double-stranded DNA using NAD as a coenzyme and as the energy source for the reaction. It is essential for DNA replication and repair of damaged DNA. This is DNA ligase from Streptococcus pyogenes serotype M6 (strain ATCC BAA-946 / MGAS10394).